The primary structure comprises 574 residues: Lysyl oxidase homolog 1 (574 aa).

The signal sequence occupies residues 1-25 (MALARGSRQLGALVWGACLCVLVHG). A propeptide spanning residues 26-95 (QQAQPGQGSD…RRSHGSPRRR (70 aa)) is cleaved from the precursor. 2 disordered regions span residues 62-123 (VPAG…GFGQ) and 239-374 (GGEE…DLVP). Positions 86–96 (RRSHGSPRRRQ) are enriched in basic residues. Composition is skewed to pro residues over residues 255-268 (PERPYVPPPPPPPD) and 313-332 (YANPPPEAYGPPRALEPPYL). Positions 311–369 (PPYANPPPEAYGPPRALEPPYLPVRSSDTPPPGGERNGAQQGRLSVGSVYRPNQNGRGL) are interaction with FBLN5. Residues 370 to 574 (PDLVPDPNYV…SATNCKIVQS (205 aa)) form a lysyl-oxidase like region. 5 cysteine pairs are disulfide-bonded: Cys395–Cys401, Cys448–Cys497, Cys481–Cys487, Cys508–Cys518, and Cys555–Cys569. Residues His449, His451, and His453 each coordinate Cu cation. Residues 477–512 (KASFCLEDSTCDFGNLKRYACTSHTQGLSPGCYDTY) constitute a cross-link (lysine tyrosylquinone (Lys-Tyr); alternate). A 2',4',5'-topaquinone; alternate modification is found at Tyr512.

The protein belongs to the lysyl oxidase family. In terms of assembly, interacts (via propeptide) with EFEMP2. Interacts with FBLN5. It depends on Cu cation as a cofactor. Requires lysine tyrosylquinone residue as cofactor. In terms of processing, the lysine tyrosylquinone cross-link (LTQ) is generated by condensation of the epsilon-amino group of a lysine with a topaquinone produced by oxidation of tyrosine. Proteolytic processing by a furin-like protease causes removal of N-terminal propeptide resulting in an enzyme largely inactive, but further proteolytic processing by BMP1 results in enzyme activation. As to expression, expressed in ocular tissues including the iris, ciliary body, lens and optic nerve. Not detected in the retina.

It is found in the secreted. Its subcellular location is the extracellular space. The protein resides in the extracellular matrix. The catalysed reaction is L-lysyl-[protein] + O2 + H2O = (S)-2-amino-6-oxohexanoyl-[protein] + H2O2 + NH4(+). Its function is as follows. Catalyzes the oxidative deamination of lysine and hydroxylysine residues in collagen and elastin, resulting in the formation of covalent cross-linkages, and the stabilization of collagen and elastin fibers. Essential for the elastic fiber homeostasis and for their maintenance at adult age. The sequence is that of Lysyl oxidase homolog 1 (LOXL1) from Homo sapiens (Human).